Reading from the N-terminus, the 1197-residue chain is ATP-dependent helicase/nuclease subunit A (1197 aa).

The 457-residue stretch at 2-458 (RQWTKEQQAA…IDLAKNFRSR (457 aa)) folds into the UvrD-like helicase ATP-binding domain. 23–30 (AAAGSGKT) is a binding site for ATP. The region spanning 485-774 (RAALYQGTEF…RIMSIHKSKG (290 aa)) is the UvrD-like helicase C-terminal domain.

This sequence belongs to the helicase family. AddA subfamily. In terms of assembly, heterodimer of AddA and AddB/RexB. Mg(2+) is required as a cofactor.

The enzyme catalyses Couples ATP hydrolysis with the unwinding of duplex DNA by translocating in the 3'-5' direction.. It catalyses the reaction ATP + H2O = ADP + phosphate + H(+). In terms of biological role, the heterodimer acts as both an ATP-dependent DNA helicase and an ATP-dependent, dual-direction single-stranded exonuclease. Recognizes the chi site generating a DNA molecule suitable for the initiation of homologous recombination. The AddA nuclease domain is required for chi fragment generation; this subunit has the helicase and 3' -&gt; 5' nuclease activities. This is ATP-dependent helicase/nuclease subunit A from Alkaliphilus oremlandii (strain OhILAs) (Clostridium oremlandii (strain OhILAs)).